Here is a 212-residue protein sequence, read N- to C-terminus: Imidazole glycerol phosphate synthase subunit HisH (212 aa).

The 210-residue stretch at 3–212 (SIAVVDYGMG…LLSNFLKWTP (210 aa)) folds into the Glutamine amidotransferase type-1 domain. The active-site Nucleophile is the Cys-82. Catalysis depends on residues His-192 and Glu-194.

In terms of assembly, heterodimer of HisH and HisF.

Its subcellular location is the cytoplasm. It carries out the reaction 5-[(5-phospho-1-deoxy-D-ribulos-1-ylimino)methylamino]-1-(5-phospho-beta-D-ribosyl)imidazole-4-carboxamide + L-glutamine = D-erythro-1-(imidazol-4-yl)glycerol 3-phosphate + 5-amino-1-(5-phospho-beta-D-ribosyl)imidazole-4-carboxamide + L-glutamate + H(+). It catalyses the reaction L-glutamine + H2O = L-glutamate + NH4(+). It participates in amino-acid biosynthesis; L-histidine biosynthesis; L-histidine from 5-phospho-alpha-D-ribose 1-diphosphate: step 5/9. Its function is as follows. IGPS catalyzes the conversion of PRFAR and glutamine to IGP, AICAR and glutamate. The HisH subunit catalyzes the hydrolysis of glutamine to glutamate and ammonia as part of the synthesis of IGP and AICAR. The resulting ammonia molecule is channeled to the active site of HisF. The protein is Imidazole glycerol phosphate synthase subunit HisH of Nitrosomonas europaea (strain ATCC 19718 / CIP 103999 / KCTC 2705 / NBRC 14298).